A 305-amino-acid polypeptide reads, in one-letter code: Tyrosine recombinase XerC (305 aa).

In terms of domain architecture, Core-binding (CB) spans 4 to 95; the sequence is TSIQALINKW…AVKNFYRFLE (92 aa). One can recognise a Tyr recombinase domain in the interval 116 to 298; it reads LLPKALSEDD…SIKHLEAVYT (183 aa). Catalysis depends on residues arginine 159, lysine 182, histidine 250, arginine 253, and histidine 276. Tyrosine 285 acts as the O-(3'-phospho-DNA)-tyrosine intermediate in catalysis.

Belongs to the 'phage' integrase family. XerC subfamily. In terms of assembly, forms a cyclic heterotetrameric complex composed of two molecules of XerC and two molecules of XerD.

It localises to the cytoplasm. Its function is as follows. Site-specific tyrosine recombinase, which acts by catalyzing the cutting and rejoining of the recombining DNA molecules. The XerC-XerD complex is essential to convert dimers of the bacterial chromosome into monomers to permit their segregation at cell division. It also contributes to the segregational stability of plasmids. This is Tyrosine recombinase XerC from Rickettsia rickettsii (strain Iowa).